An 827-amino-acid chain; its full sequence is Periplasmic nitrate reductase (827 aa).

The segment at residues 1–34 (MSLTRRDFIKANAVAATAAAAGIATPAIAQPAKA) is a signal peptide (tat-type signal). The 4Fe-4S Mo/W bis-MGD-type domain maps to 36–92 (IRWDKGVCRFCGTGCAVLVGVQDGRVVATQGDPDSPVNRGLNCIKGYFLSKIMYGED). Residues cysteine 43, cysteine 46, cysteine 50, and cysteine 78 each coordinate [4Fe-4S] cluster. Mo-bis(molybdopterin guanine dinucleotide)-binding positions include lysine 80, glutamine 148, asparagine 173, cysteine 177, 210–217 (WGSNMAEM), 241–245 (STFEH), 260–262 (QTD), methionine 371, glutamine 375, asparagine 481, 507–508 (SD), lysine 530, aspartate 557, and 717–726 (TGRVLEHWHS). Phenylalanine 793 lines the substrate pocket. Mo-bis(molybdopterin guanine dinucleotide) is bound by residues asparagine 801 and lysine 818.

This sequence belongs to the prokaryotic molybdopterin-containing oxidoreductase family. NasA/NapA/NarB subfamily. As to quaternary structure, component of the periplasmic nitrate reductase NapAB complex composed of NapA and NapB. It depends on [4Fe-4S] cluster as a cofactor. Mo-bis(molybdopterin guanine dinucleotide) is required as a cofactor. Predicted to be exported by the Tat system. The position of the signal peptide cleavage has not been experimentally proven.

It localises to the periplasm. It carries out the reaction 2 Fe(II)-[cytochrome] + nitrate + 2 H(+) = 2 Fe(III)-[cytochrome] + nitrite + H2O. Its function is as follows. Catalytic subunit of the periplasmic nitrate reductase complex NapAB. Receives electrons from NapB and catalyzes the reduction of nitrate to nitrite. This Paramagnetospirillum magneticum (strain ATCC 700264 / AMB-1) (Magnetospirillum magneticum) protein is Periplasmic nitrate reductase.